The following is a 526-amino-acid chain: Estrogen receptor beta (526 aa).

Positions 1–145 (MDIKNSPSNL…SPSSKRDAHF (145 aa)) are modulating. Residues Ser-84 and Ser-102 each carry the phosphoserine; by MAPK modification. 2 consecutive NR C4-type zinc fingers follow at residues 146–166 (CAVCSDYASGYHYGVWSCEGC) and 182–206 (CPATNQCTIDKNRRKSCQACRLRKC). The segment at residues 146–211 (CAVCSDYASG…RLRKCYEVGM (66 aa)) is a DNA-binding region (nuclear receptor). An NR LBD domain is found at 261-494 (SPEQLVLTLL…DLLLEMLNAH (234 aa)). Residues 502 to 526 (LVTGSERSRMEESESKEGSQKPQAQ) are disordered. Basic and acidic residues predominate over residues 507–520 (ERSRMEESESKEGS).

The protein belongs to the nuclear hormone receptor family. NR3 subfamily. In terms of assembly, binds DNA as a homodimer. Can form a heterodimer with ESR1. Interacts with NCOA1, NCOA3, NCOA5 and NCOA6 coactivators, leading to a strong increase of transcription of target genes. Interacts with UBE1C and AKAP13. Interacts with DNTTIP2. Interacts with CCDC62 in the presence of estradiol/E2; this interaction seems to enhance the transcription of target genes. Interacts with DNAAF4. Interacts with PRMT2. Interacts with CCAR2 (via N-terminus) in a ligand-independent manner. Interacts with RBM39, in the presence of estradiol (E2). Interacts with STUB1/CHIP. In terms of processing, phosphorylation at Ser-84 and Ser-102 recruits NCOA1.

The protein localises to the nucleus. Its function is as follows. Nuclear hormone receptor. Binds estrogens with an affinity similar to that of ESR1/ER-alpha, and activates expression of reporter genes containing estrogen response elements (ERE) in an estrogen-dependent manner. This is Estrogen receptor beta (ESR2) from Sus scrofa (Pig).